The following is a 154-amino-acid chain: Putative pre-16S rRNA nuclease (154 aa).

The protein belongs to the YqgF nuclease family.

It is found in the cytoplasm. Functionally, could be a nuclease involved in processing of the 5'-end of pre-16S rRNA. The chain is Putative pre-16S rRNA nuclease from Rickettsia africae (strain ESF-5).